A 165-amino-acid chain; its full sequence is RNA polymerase II transcriptional coactivator KELP (165 aa).

Residues 3 to 60 (KETKEKIEKTVIEILSESDMKEITEFKVRKLASEKLAIDLSEKSHKAFVRSVVEKFLD) form the DEK-C domain. The tract at residues 66 to 93 (EYENSQVNKEEEDGDKDCGKGNKEFDDD) is disordered.

This sequence belongs to the transcriptional coactivator PC4 family.

The protein resides in the nucleus. General coactivator that functions cooperatively with TAFs and mediates functional interactions between upstream activators and the general transcriptional machinery. Binds single-stranded DNA. The chain is RNA polymerase II transcriptional coactivator KELP (KELP) from Arabidopsis thaliana (Mouse-ear cress).